Consider the following 288-residue polypeptide: MSYQPQTEAATSRFLNVEEAGKTLRIHFNDCGQGDETVVLLHGSGPGATGWANFSRNIDPLVEAGYRVILLDCPGWGKSDSIVNSGSRSDLNARILKSVVDQLDIAKIHLLGNSMGGHSSVAFTLNWPERVGKLVLMGGGTGGMSLFTPMPTEGIKRLNQLYRQPTIENLKLMMDIFVFDTSDLTDALFEARLNNMLSRRDHLENFVKSLEANPKQFPDFGPRLAEIKAQTLIVWGRNDRFVPMDAGLRLLSGIAGSELHIFRDCGHWAQWEHADAFNQLVLNFLARP.

In terms of domain architecture, AB hydrolase-1 spans 38–273 (VVLLHGSGPG…DCGHWAQWEH (236 aa)). The Proton acceptor role is filled by His-267.

This sequence belongs to the AB hydrolase superfamily. MhpC family. As to quaternary structure, homodimer.

The catalysed reaction is (2Z,4E)-2-hydroxy-6-oxonona-2,4-dienedioate + H2O = (2Z)-2-hydroxypenta-2,4-dienoate + succinate + H(+). It carries out the reaction (2Z,4E,7E)-2-hydroxy-6-oxonona-2,4,7-trienedioate + H2O = (2Z)-2-hydroxypenta-2,4-dienoate + fumarate + H(+). It functions in the pathway aromatic compound metabolism; 3-phenylpropanoate degradation. Functionally, catalyzes the cleavage of the C5-C6 bond of 2-hydroxy-6-oxononadienedioate and 2-hydroxy-6-oxononatrienedioate, a dienol ring fission product of the bacterial meta-cleavage pathway for degradation of phenylpropionic acid. The sequence is that of 2-hydroxy-6-oxononadienedioate/2-hydroxy-6-oxononatrienedioate hydrolase from Escherichia coli O139:H28 (strain E24377A / ETEC).